Reading from the N-terminus, the 431-residue chain is Fumarylacetoacetase (431 aa).

A Ca(2+)-binding site is contributed by aspartate 133. Tyrosine 135 serves as a coordination point for substrate. The active-site Proton acceptor is histidine 140. Residue arginine 149 coordinates substrate. Residues glutamate 209, glutamate 211, and aspartate 243 each contribute to the Ca(2+) site. Aspartate 243 lines the Mg(2+) pocket. Residues glutamine 250 and tyrosine 254 each contribute to the substrate site. Lysine 263 and threonine 267 together coordinate Mg(2+). Threonine 362 lines the substrate pocket.

The protein belongs to the FAH family. It depends on Ca(2+) as a cofactor. Mg(2+) is required as a cofactor.

It catalyses the reaction 4-fumarylacetoacetate + H2O = acetoacetate + fumarate + H(+). It participates in amino-acid degradation; L-phenylalanine degradation; acetoacetate and fumarate from L-phenylalanine: step 6/6. Functionally, use of phenylalanine and phenylacetate as a carbon source. This chain is Fumarylacetoacetase (fahA), found in Emericella nidulans (strain FGSC A4 / ATCC 38163 / CBS 112.46 / NRRL 194 / M139) (Aspergillus nidulans).